The primary structure comprises 175 residues: MYTMQSWSCIFLIICSMQSVCHCCDWIRHHYGHLSAEYLSLLDQMGGDITKQNAPVLFPTSLYRHIDDAEFEDKVIFLKETIYQITKLFDGNMKSVTWDKKNLDDFLNILERQLENLNSCVSPAMKPERRLKRYFKKLNSKVLRKMNYSAQAWELIRKEIKRHLQRLDILAAQMY.

Residues 1–23 form the signal peptide; it reads MYTMQSWSCIFLIICSMQSVCHC. The cysteines at positions 24 and 120 are disulfide-linked.

It belongs to the alpha/beta interferon family. In terms of tissue distribution, isoform 1 and isoform 2 are expressed in several tissues, including gill, spleen, intestine, kidney and skin.

It localises to the secreted. The protein localises to the cytoplasm. The protein resides in the cytosol. Its function is as follows. Key player in antiviral response. Induces expression of TLRs, including that of TLR3, TLR9 and TLR8a1, and that of cytosolic pattern recognition receptors, including RIGI, IFIH1/MDA5 and DHX58/LGP2. Also induces MX1 and its own expression. In the presence of intracellular IFNAR2 (iIFNAR2) and IFNAR1B, intracellular isoform 3 may mediate STAT1 and STAT2 phosphorylation and induction of EIF2AK2, MX1 and RSAD2. The chain is Interferon a3 from Oncorhynchus mykiss (Rainbow trout).